We begin with the raw amino-acid sequence, 281 residues long: Tryptophan synthase alpha chain (281 aa).

Catalysis depends on proton acceptor residues Glu-49 and Asp-60.

This sequence belongs to the TrpA family. In terms of assembly, tetramer of two alpha and two beta chains.

The catalysed reaction is (1S,2R)-1-C-(indol-3-yl)glycerol 3-phosphate + L-serine = D-glyceraldehyde 3-phosphate + L-tryptophan + H2O. Its pathway is amino-acid biosynthesis; L-tryptophan biosynthesis; L-tryptophan from chorismate: step 5/5. In terms of biological role, the alpha subunit is responsible for the aldol cleavage of indoleglycerol phosphate to indole and glyceraldehyde 3-phosphate. The chain is Tryptophan synthase alpha chain from Methanocaldococcus jannaschii (strain ATCC 43067 / DSM 2661 / JAL-1 / JCM 10045 / NBRC 100440) (Methanococcus jannaschii).